The sequence spans 262 residues: Elongator complex protein 5 (262 aa).

Disordered regions lie at residues 181–214 (TPLD…FKIE) and 229–262 (PYER…DLCI). A compositionally biased stretch (polar residues) spans 200–211 (AEQTTEPASSTF). Acidic residues predominate over residues 246–262 (DADDDFDEEDPDEDLCI).

This sequence belongs to the ELP5 family. In terms of assembly, component of the elongator complex composed of Elp1, Elp2, Elp3, Elp4, Elp5 and Elp6. The elongator complex associates with and stabilizes microtubules; efficient interaction requires the full complex.

The protein localises to the cytoplasm. The protein resides in the nucleus. Its subcellular location is the cytoskeleton. It is found in the spindle. It participates in tRNA modification; 5-methoxycarbonylmethyl-2-thiouridine-tRNA biosynthesis. Component of the elongator complex, which is required for multiple tRNA modifications, including mcm5U (5-methoxycarbonylmethyl uridine), mcm5s2U (5-methoxycarbonylmethyl-2-thiouridine), and ncm5U (5-carbamoylmethyl uridine). The elongator complex catalyzes the formation of carboxymethyluridine in the wobble base at position 34 in tRNAs. Binding by the elongator complex stabilizes microtubules and promotes their growth. This induces central spindle asymmetry, promoting polarized signaling endosome trafficking during asymmetric cell division and cell fate assignation of sensory organ precursor cells. The polypeptide is Elongator complex protein 5 (Drosophila melanogaster (Fruit fly)).